A 145-amino-acid polypeptide reads, in one-letter code: Large ribosomal subunit protein uL11 (145 aa).

The protein belongs to the universal ribosomal protein uL11 family. As to quaternary structure, part of the ribosomal stalk of the 50S ribosomal subunit. Interacts with L10 and the large rRNA to form the base of the stalk. L10 forms an elongated spine to which L12 dimers bind in a sequential fashion forming a multimeric L10(L12)X complex. Post-translationally, one or more lysine residues are methylated.

Forms part of the ribosomal stalk which helps the ribosome interact with GTP-bound translation factors. This Hydrogenobaculum sp. (strain Y04AAS1) protein is Large ribosomal subunit protein uL11.